Consider the following 172-residue polypeptide: Protein CapG (172 aa).

It belongs to the transferase hexapeptide repeat family.

It functions in the pathway capsule biogenesis; capsule polysaccharide biosynthesis. Functionally, required for the biosynthesis of type 1 capsular polysaccharide. The chain is Protein CapG (capG) from Staphylococcus aureus.